The primary structure comprises 1856 residues: Protein TANC1 (1856 aa).

Methionine 1 is modified (N-acetylmethionine). Disordered regions lie at residues methionine 1–threonine 45, serine 58–proline 130, lysine 203–glycine 222, arginine 262–tyrosine 296, and isoleucine 437–glutamate 489. The span at lysine 8–glycine 21 shows a compositional bias: basic and acidic residues. The segment covering proline 29–threonine 45 has biased composition (polar residues). A phosphoserine mark is found at serine 60, serine 63, serine 64, serine 204, serine 267, and serine 462. Residues serine 60–arginine 77 show a composition bias toward low complexity. Residues lysine 203–leucine 216 show a composition bias toward polar residues. The segment covering serine 439–threonine 475 has biased composition (low complexity). ANK repeat units follow at residues glutamate 893–tyrosine 925, asparagine 931–glycine 960, asparagine 964–histidine 993, lysine 997–proline 1026, alanine 1037–isoleucine 1066, tryptophan 1075–arginine 1104, arginine 1108–leucine 1137, glutamine 1141–serine 1170, glutamate 1174–glutamine 1203, asparagine 1207–histidine 1236, and serine 1240–asparagine 1269. TPR repeat units follow at residues leucine 1286–glutamate 1319, valine 1333–serine 1366, and glutamate 1368–asparagine 1400. The span at leucine 1417–glutamine 1426 shows a compositional bias: low complexity. 3 disordered regions span residues leucine 1417–arginine 1597, aspartate 1636–phenylalanine 1720, and histidine 1832–valine 1856. Serine 1436 and serine 1463 each carry phosphoserine. Residues glutamate 1454–serine 1463 show a composition bias toward acidic residues. Composition is skewed to polar residues over residues glutamate 1490 to alanine 1505 and proline 1524 to glutamine 1556. The segment covering serine 1656–serine 1686 has biased composition (low complexity). Serine 1665, serine 1673, and serine 1674 each carry phosphoserine.

The protein belongs to the TANC family. In terms of assembly, interacts probably directly with DLG1, DLG4, HOMER1. Interacts with DLGAP1, INA, CAMK2A, GRIN2B and GRIA1. Interacts with TNIK and MINK1. Post-translationally, phosphorylated; by MINK1 and TNIK upon stimulation by RAP2A.

It localises to the postsynaptic density. Its function is as follows. May be a scaffold component in the postsynaptic density. The chain is Protein TANC1 (Tanc1) from Mus musculus (Mouse).